The primary structure comprises 282 residues: Pantothenate synthetase (282 aa).

Residue 30 to 37 participates in ATP binding; the sequence is MGYLHEGH. Histidine 37 functions as the Proton donor in the catalytic mechanism. Glutamine 61 provides a ligand contact to (R)-pantoate. Glutamine 61 contributes to the beta-alanine binding site. 147–150 provides a ligand contact to ATP; the sequence is GMKD. Glutamine 153 provides a ligand contact to (R)-pantoate. Residues valine 176 and 184 to 187 each bind ATP; that span reads KSSR.

The protein belongs to the pantothenate synthetase family. As to quaternary structure, homodimer.

It localises to the cytoplasm. It carries out the reaction (R)-pantoate + beta-alanine + ATP = (R)-pantothenate + AMP + diphosphate + H(+). It participates in cofactor biosynthesis; (R)-pantothenate biosynthesis; (R)-pantothenate from (R)-pantoate and beta-alanine: step 1/1. In terms of biological role, catalyzes the condensation of pantoate with beta-alanine in an ATP-dependent reaction via a pantoyl-adenylate intermediate. This Bacillus thuringiensis (strain Al Hakam) protein is Pantothenate synthetase.